A 152-amino-acid chain; its full sequence is Large-conductance mechanosensitive channel (152 aa).

The next 3 membrane-spanning stretches (helical) occupy residues 21 to 41 (IDLA…DSLV), 44 to 64 (VVMP…NKFL), and 92 to 112 (GNFI…FWMV).

It belongs to the MscL family. Homopentamer.

It is found in the cell inner membrane. Its function is as follows. Channel that opens in response to stretch forces in the membrane lipid bilayer. May participate in the regulation of osmotic pressure changes within the cell. The polypeptide is Large-conductance mechanosensitive channel (Bordetella bronchiseptica (strain ATCC BAA-588 / NCTC 13252 / RB50) (Alcaligenes bronchisepticus)).